The following is a 688-amino-acid chain: MSSRNNNKLPSNLPQLQNLIKRDPPAYVEEFLQQYNHYKSNVEIFKLQPNKPSKELAELVMFMAQISHCYPEHLSNFPQELKDLLSYNHTVLDPDLRMTFCKALILLRNKNLINPSSLLELFFELLRCHDKLLRKTLYTHIVTDIKNINAKHKNNKVNIVLQNFMYTMLRDSNATAAKISLDVMIELYRRNIWNDAKTVNVITTACFSKVTKILVAALTFFLGKDEEEKQDSDSESEDEGPTARDLLVQYATGKKSSKNKKKLEKAMKVLTKHKKKKKPEVFNFSAIHLIHDPQDFAEKLLKQLESSKERFEVKMMLMNLISRLVGIHELFLFNFYPFVQRFLQPHQREVTKILLFAAQASHHLVPPEIIQSLLMTVANNFVTDKNSGEVMTVGINAIKEITARCPLAMTEELLQDLAQYKTHKDKNVMMSARTLIQLFRTLNPQMLQKKFRGKPTEASIEARVQEYGELDAKDYIPGAEILEVENEEENAEGDEDGWESASLSDEADSDGEWVDVHHSSDEEQKEISEKLNSMPLEERKAKAAAVSTSRVLSQEDFQKIRMAQMRKELDAAPGKAQKRKYIEIDSDEERRGELLSLRDIERLHKKPKSDKETRLATAMAGKTDRKEFVRKKTKMNPFSSSTNKEKKKQKNFMMMRYSHNVRSKNKRSFREKQLALRDALLKKRKRMK.

Phosphoserine is present on residues Ser-232, Ser-234, and Ser-236. Residues 254-318 (KKSSKNKKKL…ERFEVKMMLM (65 aa)) are a coiled coil. Residues 484-498 (VENEEENAEGDEDGW) are compositionally biased toward acidic residues. The interval 484–524 (VENEEENAEGDEDGWESASLSDEADSDGEWVDVHHSSDEEQ) is disordered. The segment covering 514–524 (VDVHHSSDEEQ) has biased composition (basic and acidic residues). Residues Ser-586 and Ser-596 each carry the phosphoserine modification. The segment at 605-688 (KKPKSDKETR…ALLKKRKRMK (84 aa)) is disordered. A compositionally biased stretch (basic and acidic residues) spans 668 to 681 (SFREKQLALRDALL).

The protein belongs to the SDA1 family.

It is found in the nucleus. The protein localises to the nucleolus. Its function is as follows. Required for 60S pre-ribosomal subunits export to the cytoplasm. The sequence is that of Protein SDA1 homolog (SDAD1) from Bos taurus (Bovine).